The sequence spans 265 residues: Elongation factor 1-delta (265 aa).

The span at Met31 to Asp54 shows a compositional bias: polar residues. 2 disordered regions span residues Met31 to Asn64 and Lys118 to Ala155. Residues Gly130–Ala153 are compositionally biased toward acidic residues.

Belongs to the EF-1-beta/EF-1-delta family. As to quaternary structure, EF-1 is composed of 4 subunits: alpha, beta, delta, and gamma.

In terms of biological role, EF-1-beta and EF-1-delta stimulate the exchange of GDP bound to EF-1-alpha to GTP. The polypeptide is Elongation factor 1-delta (eef1d) (Xenopus laevis (African clawed frog)).